Reading from the N-terminus, the 546-residue chain is MYDVIVVGAGWCGLAAAKTYLQTCPTARLLVVDGDSSIGGTWSKERLYPHLVAEAHYGLFEFSDLPMRREGILPDGRIPSAAVHAYLTEYATKFGLLPRIRLNTWIEDIRQDPTAIGDDKAPYWTLQVAGSSQPLQARKLIIATGLTSEPRMPSFPGREDFEGHVLHSKMMGRADTGKLLNDPSIRHVVVYGGSKSAFDAVYLLLRAGKTVDWVIREGGGGPSIMTPLNILGQPSFRLNNSRVMSLFSPNPFEVAGERSWWQRVMHQRAGTFAQLLVVWFWRVLAYLLQRPWKYDYSVNGKQLKPILGLDSVLWSPATLGVMTHPTLWEDIHSGERVTIRRQNITALGQNKHVVLSNGDRITADMVVCATGWHARHSLFTPDEQLAVGLPSTSSFDPKSQAHWLNLQKAADEEILEEFPLLQNCPIALPPVRCEDDHHLYRFVAPSSGPLAQERLIAYVGFLRTTGAPIVYEAQSLWATAYLTGALHVPALEEREKEVARTNAWIRRRYICGRKVPFALFDFLPYVDMLYRDLGVNSRRKKNAVSE.

A signal peptide spans 1-17; that stretch reads MYDVIVVGAGWCGLAAA. Ile-106 contacts FAD. Asn-239 and Asn-343 each carry an N-linked (GlcNAc...) asparagine glycan.

Belongs to the FAD-binding monooxygenase family. Requires FAD as cofactor.

It functions in the pathway antifungal biosynthesis. In terms of biological role, FAD-dependent monooxygenase; part of the gene cluster that mediates the biosynthesis of the tetrahydropyranyl antifungal agent lanomycin that acts as an inhibitor of CYP51 and blocks the ergosterol biosynthesis. The biosynthesis probably begins with the formation of an hexaketide, followed by methionine mediated alkylation of C-2 and C-6, and methylation of the reduced C-3 oxygen, pyran forming reductive ring closure, oxygenation of C-4, beta-keto reduction, enoyl reduction and dehydration of the remaining oxygens, and finally, acylation with glycine to complete the biosynthesis. The polypeptide is FAD-dependent monooxygenase (Pyrenophora dematioidea (Helminthosporium dematioideum)).